An 86-amino-acid chain; its full sequence is Putative antitoxin VapB36 (86 aa).

In terms of biological role, possibly the antitoxin component of a type II toxin-antitoxin (TA) system. Its cognate toxin is VapC36 (Potential). This is Putative antitoxin VapB36 (vapB36) from Mycobacterium tuberculosis (strain CDC 1551 / Oshkosh).